We begin with the raw amino-acid sequence, 382 residues long: Mannitol-1-phosphate 5-dehydrogenase (382 aa).

A3–G14 contacts NAD(+).

This sequence belongs to the mannitol dehydrogenase family.

The catalysed reaction is D-mannitol 1-phosphate + NAD(+) = beta-D-fructose 6-phosphate + NADH + H(+). The polypeptide is Mannitol-1-phosphate 5-dehydrogenase (Pectobacterium atrosepticum (strain SCRI 1043 / ATCC BAA-672) (Erwinia carotovora subsp. atroseptica)).